Here is a 315-residue protein sequence, read N- to C-terminus: Protein OPG185 (315 aa).

An N-terminal signal peptide occupies residues 1–16 (MTRLPILLLLISLVYA). Residues 17–121 (TPFPQTSKKI…NDTDKVDYEE (105 aa)) enclose the Ig-like V-type domain. The Virion surface segment spans residues 17–279 (TPFPQTSKKI…SNYKTKDFVE (263 aa)). Residues Cys34 and Cys103 are joined by a disulfide bond. N-linked (GlcNAc...) asparagine; by host glycans are attached at residues Asn37, Asn69, Asn112, and Asn161. Over residues 191–202 (SINTVSASSGES) the composition is skewed to polar residues. Residues 191–213 (SINTVSASSGESTTDETPEPITD) form a disordered region. N-linked (GlcNAc...) asparagine; by host glycosylation occurs at Asn254. A helical transmembrane segment spans residues 280-303 (IFGITALIILSAVAIFCITYYIYN). The Intravirion portion of the chain corresponds to 304 to 315 (KRSRKYKTENKV).

It belongs to the orthopoxvirus OPG185 family. Heterodimerizes with OPG040. The heterodimer OPG185-OPG040 interacts with components of the entry fusion complex OPG143 and OPG094. Heterodimer with C3/VPC protein; disulfide-linked. In terms of processing, glycosylated; contains phosphate and sulfate-substituted glycans. O-glycosylation is required for hemagglutination and hemadsorption activities of infected cell membranes.

The protein localises to the virion membrane. It is found in the host membrane. Functionally, prevents cell to cell fusion by interacting with and directing the viral OPG040 protein on the host plasma membrane. The OPG185-OPG040 complex associates with components of the entry fusion complex (EFC) presumably to avoid superinfection and syncytium formation. Via its interaction with C3/VCP protein, protects the infected cell and probably also the extracellular enveloped virus from complement attack. The polypeptide is Protein OPG185 (OPG185) (Homo sapiens (Human)).